A 424-amino-acid chain; its full sequence is Anaerobic glycerol-3-phosphate dehydrogenase subunit B (424 aa).

This sequence belongs to the anaerobic G-3-P dehydrogenase subunit B family. As to quaternary structure, composed of a catalytic GlpA/B dimer and of membrane bound GlpC. FMN is required as a cofactor.

It carries out the reaction a quinone + sn-glycerol 3-phosphate = dihydroxyacetone phosphate + a quinol. It participates in polyol metabolism; glycerol degradation via glycerol kinase pathway; glycerone phosphate from sn-glycerol 3-phosphate (anaerobic route): step 1/1. In terms of biological role, conversion of glycerol 3-phosphate to dihydroxyacetone. Uses fumarate or nitrate as electron acceptor. The sequence is that of Anaerobic glycerol-3-phosphate dehydrogenase subunit B from Yersinia enterocolitica serotype O:8 / biotype 1B (strain NCTC 13174 / 8081).